The following is a 224-amino-acid chain: UPF0758 protein Tola_0183 (224 aa).

Residues 102 to 224 enclose the MPN domain; it reads SLTSPQLVRR…PVSFAERGWL (123 aa). The Zn(2+) site is built by His173, His175, and Asp186. The JAMM motif signature appears at 173 to 186; sequence HNHPSGVAEPSHAD.

It belongs to the UPF0758 family.

This chain is UPF0758 protein Tola_0183, found in Tolumonas auensis (strain DSM 9187 / NBRC 110442 / TA 4).